Consider the following 308-residue polypeptide: Cytochrome c biogenesis protein CcsA (308 aa).

The next 7 membrane-spanning stretches (helical) occupy residues 2–22, 44–64, 71–91, 143–163, 212–232, 239–259, and 273–293; these read IVSTLEHILTHISFSIVSILI, GMLVTFFCITGLLATHWIYLG, LSESLIFLSWSFALIHSIAYF, MILGYAALLCGSLLSVALMVI, VIGLGFIFLTIGILSGAVWAN, WSWDPKETWAFITWIVFAIYL, and AIVASIGFLIIWICYFGVNLV.

It belongs to the CcmF/CycK/Ccl1/NrfE/CcsA family. May interact with Ccs1.

The protein resides in the plastid membrane. Required during biogenesis of c-type cytochromes (cytochrome c6 and cytochrome f) at the step of heme attachment. The protein is Cytochrome c biogenesis protein CcsA of Cuscuta exaltata (Tall dodder).